The following is a 455-amino-acid chain: Growth/differentiation factor 9 (455 aa).

A signal peptide spans 1–24; sequence MALPNKFLLWFYCFAWLCFPVSLG. A propeptide spanning residues 25 to 320 is cleaved from the precursor; it reads SQASGGDAQI…GRSSHHRHRR (296 aa). Residues Asn106, Asn163, Asn236, Asn255, and Asn269 are each glycosylated (N-linked (GlcNAc...) asparagine). The segment at 305–328 is disordered; it reads EDAAEDGRSSHHRHRRGQETVSSE. Asn339 carries N-linked (GlcNAc...) asparagine glycosylation. 3 disulfides stabilise this stretch: Cys354-Cys420, Cys383-Cys452, and Cys387-Cys454.

The protein belongs to the TGF-beta family. In terms of assembly, homodimer or heterodimer (Potential). But, in contrast to other members of this family, cannot be disulfide-linked. Phosphorylated; phosphorylation is critical for GDF9 function.

The protein resides in the secreted. Its function is as follows. Required for ovarian folliculogenesis. This is Growth/differentiation factor 9 (GDF9) from Papio anubis (Olive baboon).